The sequence spans 321 residues: Phosphate-import protein PhnD (321 aa).

An N-terminal signal peptide occupies residues 1 to 22; the sequence is MKIRAHHKIATAAACVALLASA. The N-palmitoyl cysteine moiety is linked to residue Cys23. A lipid anchor (S-diacylglycerol cysteine) is attached at Cys23.

This sequence belongs to the phosphate/phosphite/phosphonate binding protein family. As to quaternary structure, the complex is composed of two ATP-binding proteins (PhnC), two transmembrane proteins (PhnE) and a solute-binding protein (PhnD).

The protein resides in the cell membrane. Its function is as follows. Part of the ABC transporter complex PhnCDE involved in phosphate import. Responsible for phosphate binding. The polypeptide is Phosphate-import protein PhnD (phnD) (Mycolicibacterium smegmatis (strain ATCC 700084 / mc(2)155) (Mycobacterium smegmatis)).